The chain runs to 237 residues: Phosphoribosylaminoimidazole-succinocarboxamide synthase (237 aa).

The protein belongs to the SAICAR synthetase family.

It catalyses the reaction 5-amino-1-(5-phospho-D-ribosyl)imidazole-4-carboxylate + L-aspartate + ATP = (2S)-2-[5-amino-1-(5-phospho-beta-D-ribosyl)imidazole-4-carboxamido]succinate + ADP + phosphate + 2 H(+). The protein operates within purine metabolism; IMP biosynthesis via de novo pathway; 5-amino-1-(5-phospho-D-ribosyl)imidazole-4-carboxamide from 5-amino-1-(5-phospho-D-ribosyl)imidazole-4-carboxylate: step 1/2. This Pseudomonas fluorescens (strain ATCC BAA-477 / NRRL B-23932 / Pf-5) protein is Phosphoribosylaminoimidazole-succinocarboxamide synthase.